Consider the following 1728-residue polypeptide: Mitochondrial 3' processome subunit 1 (1728 aa).

The transit peptide at 1-117 (MRRLILSQTL…AGKMTGSSRF (117 aa)) directs the protein to the mitochondrion. Disordered regions lie at residues 45-71 (HRKREGRMYGKPLRPVSDGENGASGDG), 88-156 (ESPV…IGQQ), and 829-863 (GCNRDGGPSRPNTATDSANKKVVSGKQTDNLPKGT).

In terms of assembly, component of the mitochondrial 3' processome (MPsome) complex composed at least of terminal uridylyltransferase KRET1/TUT1, 3'-5' exonuclease DSS1, MPSS1, MPSS2 and MPSS3. Within the complex, interacts with KRET1.

It localises to the mitochondrion. Its function is as follows. As part of the mitochondrial 3' processome (MPsome), involved in the maturation of guided RNA (gRNA) precursors. This is Mitochondrial 3' processome subunit 1 from Trypanosoma brucei brucei.